The following is a 222-amino-acid chain: Translation initiation factor 6 (222 aa).

The protein belongs to the eIF-6 family.

In terms of biological role, binds to the 50S ribosomal subunit and prevents its association with the 30S ribosomal subunit to form the 70S initiation complex. The chain is Translation initiation factor 6 from Methanocorpusculum labreanum (strain ATCC 43576 / DSM 4855 / Z).